The following is a 260-amino-acid chain: uncharacterized protein (260 aa).

The protein belongs to the MG032/MG096/MG288 family.

This is an uncharacterized protein from Mycoplasma pneumoniae (strain ATCC 29342 / M129 / Subtype 1) (Mycoplasmoides pneumoniae).